Consider the following 354-residue polypeptide: Coiled-coil domain-containing protein 86 (354 aa).

Residues 1–354 form a disordered region; the sequence is MDTPLRRSRR…QPPQRPATKV (354 aa). Phosphoserine is present on residues Ser18 and Ser24. The segment covering 31–44 has biased composition (basic and acidic residues); that stretch reads VLVEFESNPKETGE. 2 positions are modified to phosphoserine: Ser47 and Ser53. Positions 49–58 are enriched in low complexity; the sequence is PGLGSPSRQP. Thr60 carries the post-translational modification Phosphothreonine. 8 positions are modified to phosphoserine: Ser61, Ser64, Ser75, Ser86, Ser105, Ser108, Ser123, and Ser183. A compositionally biased stretch (polar residues) spans 97–107; it reads FPQNQPESSPE. Over residues 199-211 the composition is skewed to basic and acidic residues; the sequence is PAREGPAPKKREG. Residues Ser212 and Ser213 each carry the phosphoserine modification. Residues 232–248 show a composition bias toward basic residues; sequence GKPKSGRVWKDRSKKRF. Composition is skewed to basic and acidic residues over residues 267-289 and 297-311; these read DRQE…ERRR and AENL…RKAE. A coiled-coil region spans residues 274 to 317; the sequence is AKDFARHLEEEKERRRQEKKKRRAENLRRRLENERKAEIVQVIR. The span at 320-330 shows a compositional bias: basic residues; the sequence is AKLKRAKKKQL. Position 336 is a citrulline (Arg336).

Citrullinated by PADI4.

It localises to the nucleus. It is found in the chromosome. The protein localises to the nucleolus. In terms of biological role, required for proper chromosome segregation during mitosis and error-free mitotic progression. This Bos taurus (Bovine) protein is Coiled-coil domain-containing protein 86.